Here is a 468-residue protein sequence, read N- to C-terminus: H(+)/Cl(-) exchange transporter ClcA (468 aa).

Over 1 to 32 the chain is Cytoplasmic; the sequence is MIKRERIVKSVLAHVPKDAINQFVSRGSTPTS. Residues 33–69 form a helical membrane-spanning segment; that stretch reads FSVLFMAAIVGTLAGLVGTYFEIAVHFVSETRTEWLK. At 70–76 the chain is on the periplasmic side; sequence SEIGSVL. The helical transmembrane segment at 77-100 threads the bilayer; sequence PLWLAAILISGALAFIGYYLVNRF. The Selectivity filter part_1 motif lies at 106–110; that stretch reads GSGIP. Chloride is bound at residue S107. Positions 109–116 form an intramembrane region, helical; it reads IPEIEGAM. At 117–123 the chain is on the cytoplasmic side; it reads DNIRSVR. 2 helical membrane passes run 124–141 and 148–166; these read WWRV…ALGS and EGPT…TDIF. Positions 146–150 match the Selectivity filter part_2 motif; the sequence is GREGP. The Cytoplasmic portion of the chain corresponds to 167–176; sequence RVKDDDTRHS. 2 intramembrane regions (helical) span residues 177 to 189 and 193 to 201; these read LLAS…LAAA and PLAAIMFVV. The Cytoplasmic segment spans residues 202 to 214; the sequence is EEMRPQFRYSLIS. Residues 215-232 traverse the membrane as a helical segment; that stretch reads IRAVIISAIMANIVFRAI. Residues 233 to 252 lie on the Periplasmic side of the membrane; that stretch reads NGQEAVITMPQYQSPELQSL. Residues 253 to 281 form a helical membrane-spanning segment; the sequence is WLFLLLGSLFGVFGVVFNKLITIAQDSFV. Residues 282–287 are Cytoplasmic-facing; that stretch reads ALHKND. The helical transmembrane segment at 288-309 threads the bilayer; that stretch reads RKRYLITGTILGGVFGLLLLYV. At 310–329 the chain is on the periplasmic side; the sequence is PQLTGGGIGLIPDITNGNYS. A run of 2 helical transmembrane segments spans residues 330–349 and 355–376; these read ISIL…LCFG and GIFA…ASAD. The short motif at 355 to 359 is the Selectivity filter part_3 element; the sequence is GIFAP. Residues I356 and F357 each coordinate chloride. Residues 377 to 386 are Periplasmic-facing; it reads MLLPSLTIEP. Residues 387–401 constitute an intramembrane region (helical); the sequence is GVFAIAGMGALFAAT. The segment at residues 402–404 is an intramembrane region (note=Loop between two helices); that stretch reads VRA. The segment at residues 405-416 is an intramembrane region (helical); that stretch reads PITGILLVIEMT. The segment at residues 417–421 is an intramembrane region (note=Loop between two helices); that stretch reads NNYYL. Residues 422–438 traverse the membrane as a helical segment; it reads ILPLIITSLGAVIVAQL. Residues 439 to 468 lie on the Cytoplasmic side of the membrane; that stretch reads LGGQPIYSQLLHRTLKNDKLRQQDLPENQA. Y445 is a binding site for chloride.

It belongs to the chloride channel (TC 2.A.49) family. ClcA subfamily. Homodimer.

The protein localises to the cell inner membrane. The catalysed reaction is 2 chloride(in) + H(+)(out) = 2 chloride(out) + H(+)(in). In terms of biological role, proton-coupled chloride transporter. Functions as antiport system and exchanges two chloride ions for 1 proton. Probably acts as an electrical shunt for an outwardly-directed proton pump that is linked to amino acid decarboxylation, as part of the extreme acid resistance (XAR) response. This chain is H(+)/Cl(-) exchange transporter ClcA, found in Vibrio campbellii (strain ATCC BAA-1116).